The chain runs to 64 residues: U-poneritoxin(01)-Om1a (64 aa).

An N-terminal signal peptide occupies residues 1 to 27 (MKPSGLTFAFLVVFMMAIMYNSVQVTA). Positions 28–45 (DADADAEAEALANALAEA) are excised as a propeptide. Methionine 62 bears the Methionine amide mark.

Post-translationally, truncated sequences of this peptide have also been found in the venom. It is possible they have been cleaved in the venom. Expressed by the venom gland.

The protein localises to the secreted. In terms of biological role, antimicrobial peptide with activities against E.coli (MIC=1.3 uM), S.aureus (MIC=3.1 uM), and S.cerevisiae (MIC=50 uM). Also shows histamine-releasing activity (32.9% at 10 uM). Does not show hemolytic activity, even at 50 uM. It is a short peptide for which no alpha-helical region has been predicted. This Odontomachus monticola (Trap-jaw ant) protein is U-poneritoxin(01)-Om1a.